Consider the following 64-residue polypeptide: MMFRLTSVSCFLLVIVCLNLVVLTNACRLEGSSCRRSYQCCHKSCCIRECKFPCRWDGKRATFQ.

An N-terminal signal peptide occupies residues 1 to 26 (MMFRLTSVSCFLLVIVCLNLVVLTNA). 4 cysteine pairs are disulfide-bonded: cysteine 27-cysteine 41, cysteine 34-cysteine 46, cysteine 40-cysteine 50, and cysteine 45-cysteine 54. Aspartic acid 1-amide is present on aspartate 57. A propeptide spanning residues 61–64 (ATFQ) is cleaved from the precursor.

This sequence belongs to the conotoxin I2 superfamily. In terms of tissue distribution, expressed by the venom duct.

The protein localises to the secreted. The protein is Conotoxin Im11.2 of Conus imperialis (Imperial cone).